The chain runs to 320 residues: Methionyl-tRNA formyltransferase (320 aa).

114–117 (SLLP) contributes to the (6S)-5,6,7,8-tetrahydrofolate binding site.

This sequence belongs to the Fmt family.

The enzyme catalyses L-methionyl-tRNA(fMet) + (6R)-10-formyltetrahydrofolate = N-formyl-L-methionyl-tRNA(fMet) + (6S)-5,6,7,8-tetrahydrofolate + H(+). Functionally, attaches a formyl group to the free amino group of methionyl-tRNA(fMet). The formyl group appears to play a dual role in the initiator identity of N-formylmethionyl-tRNA by promoting its recognition by IF2 and preventing the misappropriation of this tRNA by the elongation apparatus. The sequence is that of Methionyl-tRNA formyltransferase from Acinetobacter baumannii (strain AB307-0294).